The primary structure comprises 391 residues: 3-ketoacyl-CoA thiolase (391 aa).

C95 acts as the Acyl-thioester intermediate in catalysis. Catalysis depends on proton acceptor residues H347 and C377.

Belongs to the thiolase-like superfamily. Thiolase family. As to quaternary structure, heterotetramer of two alpha chains (FadB) and two beta chains (FadA).

It is found in the cytoplasm. It catalyses the reaction an acyl-CoA + acetyl-CoA = a 3-oxoacyl-CoA + CoA. Its pathway is lipid metabolism; fatty acid beta-oxidation. In terms of biological role, catalyzes the final step of fatty acid oxidation in which acetyl-CoA is released and the CoA ester of a fatty acid two carbons shorter is formed. The protein is 3-ketoacyl-CoA thiolase of Vibrio parahaemolyticus serotype O3:K6 (strain RIMD 2210633).